Reading from the N-terminus, the 493-residue chain is Glycogen synthase 1 (493 aa).

Lys-15 is a binding site for ADP-alpha-D-glucose.

Belongs to the glycosyltransferase 1 family. Bacterial/plant glycogen synthase subfamily.

It carries out the reaction [(1-&gt;4)-alpha-D-glucosyl](n) + ADP-alpha-D-glucose = [(1-&gt;4)-alpha-D-glucosyl](n+1) + ADP + H(+). It functions in the pathway glycan biosynthesis; glycogen biosynthesis. In terms of biological role, synthesizes alpha-1,4-glucan chains using ADP-glucose. The polypeptide is Glycogen synthase 1 (Methylococcus capsulatus (strain ATCC 33009 / NCIMB 11132 / Bath)).